Reading from the N-terminus, the 821-residue chain is High affinity potassium transporter (821 aa).

Over residues 1 to 10 (MSDSQSNKQN) the composition is skewed to polar residues. The interval 1-47 (MSDSQSNKQNQGEDDNNVSSSIESNENYPFRLNDEESEPQSSTTESM) is disordered. Over 1–57 (MSDSQSNKQNQGEDDNNVSSSIESNENYPFRLNDEESEPQSSTTESMLKAKKQSWRQ) the chain is Cytoplasmic. Residues 17–27 (NVSSSIESNEN) show a composition bias toward low complexity. A helical transmembrane segment spans residues 58–78 (VLMLGFSSLGAIYGDIGTSPL). The Extracellular portion of the chain corresponds to 79–101 (YVLNSIKYPNSSPTEEDIYGAIS). The chain crosses the membrane as a helical span at residues 102–122 (IIFYLFTFIVIFKYILIVLFL). At 123-190 (GTNDGEGGQV…KASGFKTNPK (68 aa)) the chain is on the cytoplasmic side. The helical transmembrane segment at 191–211 (LIKFISKFILFGCFFGCSLVM) threads the bilayer. Residues 212-238 (SDGLLTPTTSVLSAIAGIQIANPSFND) are Extracellular-facing. Residues 239–259 (VLAVSEVVLIVLFLIQQFGSN) traverse the membrane as a helical segment. Residue Lys260 is a topological domain, cytoplasmic. A helical transmembrane segment spans residues 261 to 281 (ISFTFAPIIFLWLIGLIISGI). Residues 282–306 (YNIVKFHPAVFKSLSPYYAIQLLKH) are Extracellular-facing. The chain crosses the membrane as a helical span at residues 307-327 (SGIDVFSGAMLSITGTEAMFA). Residues 328–340 (DVGHFGRLPIQLT) are Cytoplasmic-facing. A helical membrane pass occupies residues 341–361 (LTLFVYPALIICYLGQGAYII). The Extracellular portion of the chain corresponds to 362–386 (KHPEALSNPFFYSIPGGLNSWIYWV). Residues 387–407 (MFVLATLSTIIASQALILGVF) form a helical membrane-spanning segment. The Cytoplasmic segment spans residues 408–434 (SITSQLINLDCFPNFKIIHVSKKYAGK). A helical transmembrane segment spans residues 435–455 (VYIPAINWLLMIGVCATTAGF). Over 456 to 463 (KNSNNVTA) the chain is Extracellular. A glycan (N-linked (GlcNAc...) asparagine) is linked at Asn460. A helical transmembrane segment spans residues 464–484 (AYGLGITLDFLVTSSLIMVCM). The Cytoplasmic segment spans residues 485-491 (TYVYNWN). A helical membrane pass occupies residues 492–512 (ILIPITYALIFLPLEVIMVIS). Residues 513 to 516 (NLKK) lie on the Extracellular side of the membrane. The chain crosses the membrane as a helical span at residues 517-537 (ITHGAWFPLMMSGIFMMFLSF). Topologically, residues 538-821 (WRWARSRKVN…KMFLGGVVRI (284 aa)) are cytoplasmic.

Belongs to the HAK/KUP transporter (TC 2.A.72) family.

The protein localises to the membrane. Its function is as follows. Major high-affinity potassium uptake protein. The sequence is that of High affinity potassium transporter (HAK1) from Schwanniomyces occidentalis (Yeast).